Consider the following 215-residue polypeptide: Adenylate kinase (215 aa).

Gly-10–Thr-15 contributes to the ATP binding site. An NMP region spans residues Ser-30 to Val-59. Residues Thr-31, Arg-36, Glu-57–Val-59, Gly-85–Arg-88, and Gln-92 each bind AMP. Positions Gly-126–Asp-162 are LID. Arg-127 serves as a coordination point for ATP. Zn(2+) contacts are provided by Cys-130 and Cys-132. Residue Ser-135–Tyr-136 participates in ATP binding. The Zn(2+) site is built by Cys-149 and Cys-152. The AMP site is built by Arg-159 and Arg-170. An ATP-binding site is contributed by Lys-198.

This sequence belongs to the adenylate kinase family. Monomer.

It localises to the cytoplasm. It carries out the reaction AMP + ATP = 2 ADP. Its pathway is purine metabolism; AMP biosynthesis via salvage pathway; AMP from ADP: step 1/1. In terms of biological role, catalyzes the reversible transfer of the terminal phosphate group between ATP and AMP. Plays an important role in cellular energy homeostasis and in adenine nucleotide metabolism. The sequence is that of Adenylate kinase from Methanosarcina acetivorans (strain ATCC 35395 / DSM 2834 / JCM 12185 / C2A).